The primary structure comprises 251 residues: Phosphate import ATP-binding protein PstB (251 aa).

The 242-residue stretch at 5–246 (MNSKDVNFWY…PENKKTEDYI (242 aa)) folds into the ABC transporter domain. 37–44 (GPSGCGKS) is a binding site for ATP.

The protein belongs to the ABC transporter superfamily. Phosphate importer (TC 3.A.1.7) family. The complex is composed of two ATP-binding proteins (PstB), two transmembrane proteins (PstC and PstA) and a solute-binding protein (PstS).

The protein resides in the cell membrane. The catalysed reaction is phosphate(out) + ATP + H2O = ADP + 2 phosphate(in) + H(+). In terms of biological role, part of the ABC transporter complex PstSACB involved in phosphate import. Responsible for energy coupling to the transport system. In Methanococcus maripaludis (strain DSM 14266 / JCM 13030 / NBRC 101832 / S2 / LL), this protein is Phosphate import ATP-binding protein PstB.